The following is a 197-amino-acid chain: Small ribosomal subunit protein uS4B (197 aa).

The S4 RNA-binding domain maps to serine 88–asparagine 150.

This sequence belongs to the universal ribosomal protein uS4 family. Part of the 30S ribosomal subunit. Contacts protein S5. The interaction surface between S4 and S5 is involved in control of translational fidelity.

Its function is as follows. One of the primary rRNA binding proteins, it binds directly to 16S rRNA where it nucleates assembly of the body of the 30S subunit. With S5 and S12 plays an important role in translational accuracy. The chain is Small ribosomal subunit protein uS4B from Clostridium perfringens (strain ATCC 13124 / DSM 756 / JCM 1290 / NCIMB 6125 / NCTC 8237 / Type A).